We begin with the raw amino-acid sequence, 225 residues long: ATP-dependent dethiobiotin synthetase BioD 1 (225 aa).

Position 13-18 (13-18 (EVGKTV)) interacts with ATP. T17 lines the Mg(2+) pocket. Residue K38 is part of the active site. S42 contributes to the substrate binding site. ATP-binding positions include D55, 116 to 119 (EGAG), 176 to 177 (ND), 205 to 207 (PWL), and E212. Residues D55 and E116 each coordinate Mg(2+).

Belongs to the dethiobiotin synthetase family. As to quaternary structure, homodimer. Requires Mg(2+) as cofactor.

The protein resides in the cytoplasm. The catalysed reaction is (7R,8S)-7,8-diammoniononanoate + CO2 + ATP = (4R,5S)-dethiobiotin + ADP + phosphate + 3 H(+). Its pathway is cofactor biosynthesis; biotin biosynthesis; biotin from 7,8-diaminononanoate: step 1/2. Catalyzes a mechanistically unusual reaction, the ATP-dependent insertion of CO2 between the N7 and N8 nitrogen atoms of 7,8-diaminopelargonic acid (DAPA, also called 7,8-diammoniononanoate) to form a ureido ring. In Escherichia coli O157:H7, this protein is ATP-dependent dethiobiotin synthetase BioD 1.